The following is a 269-amino-acid chain: Aquaporin-1 (269 aa).

Residues 1 to 11 lie on the Cytoplasmic side of the membrane; that stretch reads MASEFKKKLFW. A helical membrane pass occupies residues 12–29; the sequence is RAVVAEFLAMTLFVFISI. Residues 30–46 lie on the Extracellular side of the membrane; it reads GSALGFKYPVGNNQTAV. N-linked (GlcNAc...) asparagine glycosylation is present at N42. A helical membrane pass occupies residues 47 to 65; sequence QDNVKVSLAFGLSIATLAQ. The Cytoplasmic portion of the chain corresponds to 66-68; it reads SVG. An intramembrane segment occupies 69-82; that stretch reads HISGAHLNPAVTLG. The short motif at 76–78 is the NPA 1 element; it reads NPA. Topologically, residues 83 to 90 are cytoplasmic; it reads LLLSCQIS. The chain crosses the membrane as a helical span at residues 91–109; the sequence is IFRALMYIIAQCVGAIVAT. Over 110 to 133 the chain is Extracellular; sequence AILSGITSSLPGNSLGRNDLADGV. Residues 134–153 form a helical membrane-spanning segment; the sequence is NSGQGLGIEIIGTLQLVLCV. The Cytoplasmic segment spans residues 154–163; the sequence is LATTDRRRRD. Residues 164–181 form a helical membrane-spanning segment; that stretch reads LGGSAPLAIGLSVALGHL. At 182–186 the chain is on the extracellular side; it reads LAIDY. Residues 187–199 lie within the membrane without spanning it; that stretch reads TGCGINPARSFGS. Positions 192-194 match the NPA 2 motif; that stretch reads NPA. Topologically, residues 200–206 are extracellular; it reads AVITHNF. Residue N205 is glycosylated (N-linked (GlcNAc...) asparagine). Residues 207-224 traverse the membrane as a helical segment; that stretch reads SNHWIFWVGPFIGGALAV. The Cytoplasmic segment spans residues 225–269; it reads LIYDFILAPRSSDFTDRVKVWTSGQVEEYDLDADDINSRVEMKPK. S247 is modified (phosphoserine). Y253 is subject to Phosphotyrosine. S262 carries the post-translational modification Phosphoserine.

The protein belongs to the MIP/aquaporin (TC 1.A.8) family. In terms of assembly, homotetramer; each monomer provides an independent water pore. Component of the ankyrin-1 complex in the erythrocyte, composed of ANK1, RHCE, RHAG, SLC4A1, EPB42, GYPA, GYPB and AQP1. Interacts with EPHB2; involved in endolymph production in the inner ear. Identified in a complex with STOM. Interacts (via the N-terminal) with ANK1 (via ANK 1-5 repeats). Interacts (via the C-terminal) with EPB42.

It localises to the cell membrane. The catalysed reaction is H2O(in) = H2O(out). It catalyses the reaction nitric oxide(out) = nitric oxide(in). The enzyme catalyses CO2(out) = CO2(in). It carries out the reaction glycerol(in) = glycerol(out). The catalysed reaction is H2O2(out) = H2O2(in). It catalyses the reaction K(+)(in) = K(+)(out). The enzyme catalyses Na(+)(in) = Na(+)(out). In terms of biological role, forms a water channel that facilitates the transport of water across cell membranes, playing a crucial role in water homeostasis in various tissues. Could also be permeable to small solutes including hydrogen peroxide, glycerol and gases such as amonnia (NH3), nitric oxide (NO) and carbon dioxide (CO2). Recruited to the ankyrin-1 complex, a multiprotein complex of the erythrocyte membrane, it could be part of a CO2 metabolon, linking facilitated diffusion of CO2 across the membrane, anion exchange of Cl(-)/HCO3(-) and interconversion of dissolved CO2 and carbonic acid in the cytosol. In vitro, it shows non-selective gated cation channel activity and may be permeable to cations like K(+) and Na(+) in vivo. The chain is Aquaporin-1 from Pongo abelii (Sumatran orangutan).